The sequence spans 312 residues: MASYLDFEKNIQQIDEDIINAQIKGDTEAVSILKKNLEKEISKTYKNLSDFQRLQLARHPDRPYALDYIELILNDAHEIHGDRAFRDDPAIVCFMGYLGEKKIIVIGEQKGRGTKDKIARNFGMPHPEGYRKALRVARLAEKFQIPILFLIDTPGAYPGIGAEERGQSEAIARNLYELSDLKIPTIAIVIGEGGSGGALAIGVADKLVMMKNSVFSVISPEGCAAILWNDPAKSEAATKAMKVTADDLKSQGLIDDVIDEPTNGAHRNKEAAAVAIADYVKKSLNELENIDVRELSANRMQKILKLGAYQEA.

The CoA carboxyltransferase C-terminal domain maps to 36-286 (NLEKEISKTY…ADYVKKSLNE (251 aa)).

This sequence belongs to the AccA family. As to quaternary structure, acetyl-CoA carboxylase is a heterohexamer composed of biotin carboxyl carrier protein (AccB), biotin carboxylase (AccC) and two subunits each of ACCase subunit alpha (AccA) and ACCase subunit beta (AccD).

The protein resides in the cytoplasm. The catalysed reaction is N(6)-carboxybiotinyl-L-lysyl-[protein] + acetyl-CoA = N(6)-biotinyl-L-lysyl-[protein] + malonyl-CoA. Its pathway is lipid metabolism; malonyl-CoA biosynthesis; malonyl-CoA from acetyl-CoA: step 1/1. Component of the acetyl coenzyme A carboxylase (ACC) complex. First, biotin carboxylase catalyzes the carboxylation of biotin on its carrier protein (BCCP) and then the CO(2) group is transferred by the carboxyltransferase to acetyl-CoA to form malonyl-CoA. This is Acetyl-coenzyme A carboxylase carboxyl transferase subunit alpha from Campylobacter jejuni (strain RM1221).